The sequence spans 682 residues: Methionine--tRNA ligase (682 aa).

The short motif at 14–24 is the 'HIGH' region element; sequence PYANGSIHLGH. Zn(2+) contacts are provided by Cys-145, Cys-148, Cys-158, and Cys-161. The 'KMSKS' region signature appears at 331–335; the sequence is KMSKS. Lys-334 is a binding site for ATP. The 103-residue stretch at 580–682 folds into the tRNA-binding domain; that stretch reads AFAAIDLRVA…SGARPGQRIK (103 aa).

This sequence belongs to the class-I aminoacyl-tRNA synthetase family. MetG type 1 subfamily. As to quaternary structure, homodimer. Zn(2+) serves as cofactor.

It is found in the cytoplasm. The enzyme catalyses tRNA(Met) + L-methionine + ATP = L-methionyl-tRNA(Met) + AMP + diphosphate. In terms of biological role, is required not only for elongation of protein synthesis but also for the initiation of all mRNA translation through initiator tRNA(fMet) aminoacylation. The chain is Methionine--tRNA ligase from Pseudomonas syringae pv. syringae (strain B728a).